A 376-amino-acid polypeptide reads, in one-letter code: Protein insensitive (376 aa).

A coiled-coil region spans residues 50–79 (QVEVENRALRDKVRYLEAKLQQHKDLLSQI). The BEN domain maps to 258–356 (GPNNTCVPAS…TKCADENKMM (99 aa)).

Homodimer. Interacts (via BEN domain) with Su(H). Interacts with Cp190.

The protein localises to the nucleus. Functionally, can act as both a transcriptional repressor and corepressor. Represses the expression of genes involved in neural development and preferentially binds palindromic sequence 5'-CCAATTGG-3' to mediate transcriptional repression. Acts as a corepressor for suppressor of hairless (Su(H)) and inhibits Notch signaling during peripheral nervous system development. The protein is Protein insensitive (insv) of Drosophila melanogaster (Fruit fly).